A 114-amino-acid polypeptide reads, in one-letter code: UPF0145 protein STK_10800 (114 aa).

The protein belongs to the UPF0145 family.

The protein is UPF0145 protein STK_10800 of Sulfurisphaera tokodaii (strain DSM 16993 / JCM 10545 / NBRC 100140 / 7) (Sulfolobus tokodaii).